The sequence spans 446 residues: Glucosylglycerate hydrolase (446 aa).

Substrate contacts are provided by residues Tyr-36, 40-43, Tyr-88, Gln-115, and Gly-180; that span reads WSWD. The Proton donor role is filled by Asp-182. Substrate-binding positions include Arg-216 and 375-376; that span reads YW. Glu-419 functions as the Proton acceptor in the catalytic mechanism. Residue Gln-434 coordinates substrate.

Belongs to the glycosyl hydrolase 63 family. In terms of assembly, homotetramer. Dimer of dimers.

The catalysed reaction is (2R)-2-O-(alpha-D-glucopyranosyl)-glycerate + H2O = (R)-glycerate + D-glucose. Activity is not dependent on divalent cations, but it is enhanced by Mg(2+). Catalyzes the hydrolysis of glucosylglycerate (GG) to glycerate and glucose. Involved in recovery from nitrogen starvation by promoting the rapid mobilization of the glucosylglycerate that accumulates under these conditions. Can also hydrolyze mannosylglycerate (MG), with tenfold lower efficiency. The chain is Glucosylglycerate hydrolase from Mycolicibacterium hassiacum (strain DSM 44199 / CIP 105218 / JCM 12690 / 3849) (Mycobacterium hassiacum).